The chain runs to 113 residues: Nucleoid-associated protein ROP_41370 (113 aa).

Belongs to the YbaB/EbfC family. Homodimer.

It localises to the cytoplasm. The protein resides in the nucleoid. Binds to DNA and alters its conformation. May be involved in regulation of gene expression, nucleoid organization and DNA protection. This Rhodococcus opacus (strain B4) protein is Nucleoid-associated protein ROP_41370.